We begin with the raw amino-acid sequence, 209 residues long: MDPFLVLLHSVSAGLSSSDLTQLKFLCQNHISKRKLELAQSGLDLFTVLLQQNELNAEHTALLRELLCSLRRKDLLLRLDDFERGAAGGAAPEDRDLRAAMEIICDNVGKDWRRLARHLGVSDVKIEAIEEKYPRNLAEQVRELLRVWKNSTRENAAVSCLVGALRGCQLNVVADLIEEDQRARALQSGSANPGSFTAWDSGSAAPGAS.

The DED domain occupies P3 to D81. One can recognise a Death domain in the interval L97–Q181. A compositionally biased stretch (polar residues) spans Q187 to D200. Residues Q187–S209 are disordered.

In terms of assembly, can self-associate. Component of the AIM2 PANoptosome complex, a multiprotein complex that drives inflammatory cell death (PANoptosis). Component of the death-induced signaling complex (DISC) composed of cell surface receptor FAS/CD95 or TNFRSF1A, adapter protein FADD and the CASP8 protease; recruitment of CASP8 to the complex is required for processing of CASP8 into the p18 and p10 subunits. Interacts (via death domain) with FAS (via death domain). Interacts directly (via DED domain) with NOL3 (via CARD domain); inhibits death-inducing signaling complex (DISC) assembly by inhibiting the increase in FAS-FADD binding induced by FAS activation. Interacts with CFLAR, PEA15 and MBD4. When phosphorylated, part of a complex containing HIPK3 and FAS. May interact with MAVS/IPS1. Interacts with MOCV v-CFLAR protein and PIDD1. Interacts with RIPK1 and TRADD. Interacts with stimulated TNFRSF10B. Interacts with DDX24. Phosphorylated.

Its subcellular location is the cytoplasm. In terms of biological role, apoptotic adapter molecule that recruits caspases CASP8 or CASP10 to the activated FAS/CD95 or TNFRSF1A/TNFR-1 receptors. The resulting aggregate called the death-inducing signaling complex (DISC) performs CASP8 proteolytic activation. Active CASP8 initiates the subsequent cascade of caspases mediating apoptosis. Involved in interferon-mediated antiviral immune response, playing a role in the positive regulation of interferon signaling. The polypeptide is FAS-associated death domain protein (Bos taurus (Bovine)).